A 164-amino-acid chain; its full sequence is ATP synthase subunit b 1 (164 aa).

Residues 8-28 (PETWVAVAFVILMGVFAYFGV) traverse the membrane as a helical segment.

Belongs to the ATPase B chain family. F-type ATPases have 2 components, F(1) - the catalytic core - and F(0) - the membrane proton channel. F(1) has five subunits: alpha(3), beta(3), gamma(1), delta(1), epsilon(1). F(0) has three main subunits: a(1), b(2) and c(10-14). The alpha and beta chains form an alternating ring which encloses part of the gamma chain. F(1) is attached to F(0) by a central stalk formed by the gamma and epsilon chains, while a peripheral stalk is formed by the delta and b chains.

Its subcellular location is the cell inner membrane. F(1)F(0) ATP synthase produces ATP from ADP in the presence of a proton or sodium gradient. F-type ATPases consist of two structural domains, F(1) containing the extramembraneous catalytic core and F(0) containing the membrane proton channel, linked together by a central stalk and a peripheral stalk. During catalysis, ATP synthesis in the catalytic domain of F(1) is coupled via a rotary mechanism of the central stalk subunits to proton translocation. Functionally, component of the F(0) channel, it forms part of the peripheral stalk, linking F(1) to F(0). In Rhodopseudomonas palustris (strain BisB18), this protein is ATP synthase subunit b 1.